Here is a 250-residue protein sequence, read N- to C-terminus: Indole-3-glycerol phosphate synthase (250 aa).

Belongs to the TrpC family.

The enzyme catalyses 1-(2-carboxyphenylamino)-1-deoxy-D-ribulose 5-phosphate + H(+) = (1S,2R)-1-C-(indol-3-yl)glycerol 3-phosphate + CO2 + H2O. It functions in the pathway amino-acid biosynthesis; L-tryptophan biosynthesis; L-tryptophan from chorismate: step 4/5. The polypeptide is Indole-3-glycerol phosphate synthase (Bacillus velezensis (strain DSM 23117 / BGSC 10A6 / LMG 26770 / FZB42) (Bacillus amyloliquefaciens subsp. plantarum)).